The chain runs to 208 residues: Recombination protein RecR (208 aa).

The C4-type zinc-finger motif lies at 60 to 75 (CKVCHNICDDEVCSIC). The Toprim domain maps to 83–178 (SLVCVVENIK…RISVIARGVS (96 aa)).

This sequence belongs to the RecR family.

Functionally, may play a role in DNA repair. It seems to be involved in an RecBC-independent recombinational process of DNA repair. It may act with RecF and RecO. In Parabacteroides distasonis (strain ATCC 8503 / DSM 20701 / CIP 104284 / JCM 5825 / NCTC 11152), this protein is Recombination protein RecR.